A 383-amino-acid polypeptide reads, in one-letter code: Delta(12)-fatty-acid desaturase (383 aa).

Residues 1 to 24 are disordered; the sequence is MGAGGRMPVPTSSKKSETDTTKRV. A compositionally biased stretch (basic and acidic residues) spans 14–24; the sequence is KKSETDTTKRV. The chain crosses the membrane as a helical span at residues 56 to 76; that stretch reads LISDIIIASCFYYVATNYFSL. Positions 105–109 match the Histidine box-1 motif; the sequence is HECGH. The chain crosses the membrane as a helical span at residues 117-137; sequence WLDDTVGLIFHSFLLVPYFSW. Residues 141–145 carry the Histidine box-2 motif; the sequence is HRRHH. The next 3 membrane-spanning stretches (helical) occupy residues 179-199, 225-245, and 252-272; these read IMML…FNVS, IYLS…YAAA, and ICLY…ITYL. Positions 315–319 match the Histidine box-3 motif; it reads HVAHH.

This sequence belongs to the fatty acid desaturase type 1 family. As to quaternary structure, homo- and heterodimer. Interacts with FAD3 but not with FAD6. FAD2-FAD3 heterodimers can form a metabolic channel in which 18:1-PC is converted to 18:3-PC without releasing a free 18:2-PC intermediate. In terms of tissue distribution, expressed in shoots and roots. Expressed in leaves, stems, flowers and siliques.

The protein resides in the endoplasmic reticulum membrane. It is found in the microsome membrane. The catalysed reaction is (9Z)-octadecenoyl-CoA + 2 Fe(II)-[cytochrome b5] + O2 + 2 H(+) = (9Z,12Z)-octadecadienoyl-CoA + 2 Fe(III)-[cytochrome b5] + 2 H2O. It carries out the reaction (9Z)-hexadecenoyl-CoA + 2 Fe(II)-[cytochrome b5] + O2 + 2 H(+) = (9Z,12Z)-hexadecadienoyl-CoA + 2 Fe(III)-[cytochrome b5] + 2 H2O. The enzyme catalyses a (9Z)-octadecenoyl-containing glycerolipid + 2 Fe(II)-[cytochrome b5] + O2 + 2 H(+) = a (9Z,12Z)-octadecadienoyl-containing glycerolipid + 2 Fe(III)-[cytochrome b5] + 2 H2O. It catalyses the reaction (9Z)-octadecenoyl-CoA + AH2 + O2 = (9Z,12Z)-octadecadienoyl-CoA + A + 2 H2O. The catalysed reaction is (9Z)-hexadecenoyl-CoA + AH2 + O2 = (9Z,12Z)-hexadecadienoyl-CoA + A + 2 H2O. It carries out the reaction (9Z)-tetradecenoyl-CoA + 2 Fe(II)-[cytochrome b5] + O2 + 2 H(+) = (9Z,12Z)-tetradecadienoyl-CoA + 2 Fe(III)-[cytochrome b5] + 2 H2O. The enzyme catalyses (9Z)-pentadecenoyl-CoA + 2 Fe(II)-[cytochrome b5] + O2 + 2 H(+) = (9Z,12Z)-pentadecadienoyl-CoA + 2 Fe(III)-[cytochrome b5] + 2 H2O. It catalyses the reaction (9Z)-heptadecenoyl-CoA + 2 Fe(II)-[cytochrome b5] + O2 + 2 H(+) = (9Z,12Z)-heptadecadienoyl-CoA + 2 Fe(III)-[cytochrome b5] + 2 H2O. It functions in the pathway lipid metabolism; polyunsaturated fatty acid biosynthesis. Functionally, ER (microsomal) omega-6 fatty acid desaturase introduces the second double bond in the biosynthesis of 18:3 fatty acids, important constituents of plant membranes. Delta(12)-desaturase with regioselectivity determined by the double bond (delta(9) position) and carboxyl group of the substrate. Can use both 16:1 and 18:1 fatty acids as substrates. It is thought to use cytochrome b5 as an electron donor and to act on fatty acids esterified to phosphatidylcholine (PC) and, possibly, other phospholipids. Very low constitutive hydroxylation activity. Required for desaturation of fatty acids present in extraplastidial membranes, including mitochondria. Required for salt tolerance during seed germination and early seedling growth. In Arabidopsis thaliana (Mouse-ear cress), this protein is Delta(12)-fatty-acid desaturase.